The sequence spans 161 residues: Disulfide bond formation protein B (161 aa).

At 1–8 the chain is on the cytoplasmic side; the sequence is MQANSRTY. A helical transmembrane segment spans residues 9–25; it reads FLLIAIVSFAMVGAALY. Topologically, residues 26 to 43 are periplasmic; it reads MQYAENLQPCPLCIMQRF. A disulfide bond links Cys35 and Cys38. A helical membrane pass occupies residues 44 to 58; the sequence is AFIGIGIFSLLAVIA. Residues 59 to 63 are Cytoplasmic-facing; the sequence is QNTRT. The chain crosses the membrane as a helical span at residues 64 to 81; that stretch reads LWQGLGMLSGVGGIAVAG. Topologically, residues 82 to 136 are periplasmic; sequence YQVALLMNPKASCGIDPLENWVNSLPTAKLLPQVFYSDGLCTAPTPPILGLSIPA. Cys94 and Cys122 form a disulfide bridge. Residues 137 to 155 form a helical membrane-spanning segment; that stretch reads WSLIWLLILTLTLAVGLIR. The Cytoplasmic portion of the chain corresponds to 156-161; that stretch reads REKHFR.

This sequence belongs to the DsbB family.

Its subcellular location is the cell inner membrane. Functionally, required for disulfide bond formation in some periplasmic proteins. Acts by oxidizing the DsbA protein. The polypeptide is Disulfide bond formation protein B (Cupriavidus metallidurans (strain ATCC 43123 / DSM 2839 / NBRC 102507 / CH34) (Ralstonia metallidurans)).